The primary structure comprises 98 residues: Small ribosomal subunit protein bS6 (98 aa).

It belongs to the bacterial ribosomal protein bS6 family.

Binds together with bS18 to 16S ribosomal RNA. This Lacticaseibacillus paracasei (strain ATCC 334 / BCRC 17002 / CCUG 31169 / CIP 107868 / KCTC 3260 / NRRL B-441) (Lactobacillus paracasei) protein is Small ribosomal subunit protein bS6.